Consider the following 207-residue polypeptide: Ras-related protein Rab-8B (207 aa).

The GTP site is built by S17, G18, V19, G20, K21, T22, C23, T35, S39, and T40. T22 lines the Mg(2+) pocket. Short sequence motifs (switch) lie at residues D31–F45 and D63–G80. Mg(2+) contacts are provided by T40 and D63. A GTP-binding site is contributed by G66. T72 carries the phosphothreonine; by LRRK2 modification. Residues N121, K122, D124, A152, and K153 each contribute to the GTP site. 2 positions are modified to phosphoserine: S180 and S183. Residue C204 is modified to Cysteine methyl ester. C204 carries S-geranylgeranyl cysteine lipidation. A propeptide spans S205–L207 (removed in mature form).

This sequence belongs to the small GTPase superfamily. Rab family. In terms of assembly, associated with actin, delta-catenin and alpha and beta tubulins. Interacts with OTOF. Interacts with PEX5R. Interacts with RAB3IP. Interacts with VIM. Interacts with CDH1. Interacts with MICALL2. Interacts with GDI1, GDI2, CHML and CHM; phosphorylation at Thr-72 disrupts these interactions. Interacts with MICAL1. The cofactor is Mg(2+). Phosphorylation of Thr-72 in the switch II region by LRRK2 prevents the association of RAB regulatory proteins, including CHM, CHML and RAB GDP dissociation inhibitors GDI1 and GDI2.

Its subcellular location is the cell membrane. The protein localises to the cytoplasmic vesicle. It localises to the phagosome membrane. The protein resides in the endosome membrane. It carries out the reaction GTP + H2O = GDP + phosphate + H(+). With respect to regulation, regulated by guanine nucleotide exchange factors (GEFs) including RAB3IP/RABIN8 which promotes the exchange of bound GDP for free GTP. Regulated by GTPase activating proteins (GAPs) which increase the GTP hydrolysis activity. Inhibited by GDP dissociation inhibitors (GDIs). Its function is as follows. The small GTPases Rab are key regulators of intracellular membrane trafficking, from the formation of transport vesicles to their fusion with membranes. Rabs cycle between an inactive GDP-bound form and an active GTP-bound form that is able to recruit to membranes different sets of downstream effectors directly responsible for vesicle formation, movement, tethering and fusion. RAB8B may be involved in polarized vesicular trafficking and neurotransmitter release. May participate in cell junction dynamics in Sertoli cells. May also participate in the export of a subset of neosynthesized proteins through a Rab8-Rab10-Rab11-dependent endososomal export route. The sequence is that of Ras-related protein Rab-8B from Mus musculus (Mouse).